Here is a 304-residue protein sequence, read N- to C-terminus: L-threonate dehydrogenase (304 aa).

Residues 7-35 (YAVA…TYGV) and Thr-102 contribute to the NAD(+) site. The active site involves Lys-178. Lys-246 is an NAD(+) binding site.

The protein belongs to the HIBADH-related family. L-threonate dehydrogenase subfamily.

It catalyses the reaction L-threonate + NAD(+) = 2-dehydro-L-erythronate + NADH + H(+). Functionally, catalyzes oxidation of L-threonate to 2-oxo-tetronate. Can use either NAD(+) or NADP(+) as cosubstrate, with a preference for NAD(+). The protein is L-threonate dehydrogenase of Pectobacterium atrosepticum (strain SCRI 1043 / ATCC BAA-672) (Erwinia carotovora subsp. atroseptica).